A 351-amino-acid polypeptide reads, in one-letter code: Alcohol dehydrogenase 2 (351 aa).

Zn(2+)-binding residues include cysteine 47, histidine 70, cysteine 101, cysteine 104, cysteine 107, cysteine 115, and cysteine 157. NAD(+) contacts are provided by residues 181–187 (GAGGGLG), aspartate 205, lysine 209, 271–273 (VGL), and arginine 343.

This sequence belongs to the zinc-containing alcohol dehydrogenase family. As to quaternary structure, homotetramer. The cofactor is Zn(2+).

It carries out the reaction a primary alcohol + NAD(+) = an aldehyde + NADH + H(+). The enzyme catalyses a secondary alcohol + NAD(+) = a ketone + NADH + H(+). This chain is Alcohol dehydrogenase 2 (sodh-2), found in Caenorhabditis elegans.